The primary structure comprises 384 residues: Spermidine/putrescine import ATP-binding protein PotA (384 aa).

The ABC transporter domain maps to 6 to 238; that stretch reads ITFNNVSKTF…PINHFVANFI (233 aa). ATP is bound at residue 40 to 47; the sequence is GASGSGKS.

It belongs to the ABC transporter superfamily. Spermidine/putrescine importer (TC 3.A.1.11.1) family. In terms of assembly, the complex is composed of two ATP-binding proteins (PotA), two transmembrane proteins (PotB and PotC) and a solute-binding protein (PotD).

Its subcellular location is the cell membrane. The enzyme catalyses ATP + H2O + polyamine-[polyamine-binding protein]Side 1 = ADP + phosphate + polyamineSide 2 + [polyamine-binding protein]Side 1.. Functionally, part of the ABC transporter complex PotABCD involved in spermidine/putrescine import. Responsible for energy coupling to the transport system. The sequence is that of Spermidine/putrescine import ATP-binding protein PotA from Streptococcus pyogenes serotype M28 (strain MGAS6180).